A 473-amino-acid polypeptide reads, in one-letter code: Argininosuccinate lyase (473 aa).

The protein belongs to the lyase 1 family. Argininosuccinate lyase subfamily.

It localises to the cytoplasm. It catalyses the reaction 2-(N(omega)-L-arginino)succinate = fumarate + L-arginine. It functions in the pathway amino-acid biosynthesis; L-arginine biosynthesis; L-arginine from L-ornithine and carbamoyl phosphate: step 3/3. This chain is Argininosuccinate lyase, found in Streptomyces clavuligerus.